The chain runs to 211 residues: FMN-dependent NADH:quinone oxidoreductase 2 (211 aa).

17–19 (SYS) serves as a coordination point for FMN.

This sequence belongs to the azoreductase type 1 family. Homodimer. Requires FMN as cofactor.

It catalyses the reaction 2 a quinone + NADH + H(+) = 2 a 1,4-benzosemiquinone + NAD(+). The catalysed reaction is N,N-dimethyl-1,4-phenylenediamine + anthranilate + 2 NAD(+) = 2-(4-dimethylaminophenyl)diazenylbenzoate + 2 NADH + 2 H(+). Its activity is regulated as follows. Strongly inhibited by Pb(2+) and weakly inhibited by Cu(2+), Hg(2+) and Fe(2+). Stable in presence of Ag(+). Functionally, quinone reductase that provides resistance to thiol-specific stress caused by electrophilic quinones. Contributes to resistance to 2-methylhydroquinone (2-MHQ) and catechol. Exhibits NADH-dependent 2,6-dichloroindophenol (DCIP) oxidoreductase activity. In terms of biological role, also exhibits azoreductase activity. Catalyzes the reductive cleavage of the azo bond in aromatic azo compounds to the corresponding amines. Can reduce methyl red. In Bacillus subtilis (strain 168), this protein is FMN-dependent NADH:quinone oxidoreductase 2.